The sequence spans 256 residues: Large ribosomal subunit protein bL21c (256 aa).

The N-terminal 55 residues, 1-55 (MASATLAFSCSSLCATLKLPQNLNPLLLNVPPLSKPFSGVVSPPSLSRLSLLPVA), are a transit peptide targeting the chloroplast.

In terms of assembly, component of the chloroplast large ribosomal subunit (LSU). Mature 70S chloroplast ribosomes of higher plants consist of a small (30S) and a large (50S) subunit. The 30S small subunit contains 1 molecule of ribosomal RNA (16S rRNA) and 24 different proteins. The 50S large subunit contains 3 rRNA molecules (23S, 5S and 4.5S rRNA) and 33 different proteins.

It is found in the plastid. It localises to the chloroplast. In terms of biological role, component of the chloroplast ribosome (chloro-ribosome), a dedicated translation machinery responsible for the synthesis of chloroplast genome-encoded proteins, including proteins of the transcription and translation machinery and components of the photosynthetic apparatus. This Spinacia oleracea (Spinach) protein is Large ribosomal subunit protein bL21c (RPL21).